Consider the following 652-residue polypeptide: Carboxypeptidase S1 homolog A (652 aa).

The N-terminal stretch at 1 to 19 is a signal peptide; the sequence is MRLAASIAVALPVIGAASA. A disulfide bridge connects residues C50 and C121. N-linked (GlcNAc...) asparagine glycans are attached at residues N77, N132, N161, N168, N184, and N202. S238 is a catalytic residue. Residues N260, N299, N347, and N410 are each glycosylated (N-linked (GlcNAc...) asparagine). 2 disulfide bridges follow: C325-C361 and C332-C354. The active site involves D458. C461 is a substrate binding site. N-linked (GlcNAc...) asparagine glycans are attached at residues N474, N492, and N505. H516 is an active-site residue. E517 is a substrate binding site. Residue N594 is glycosylated (N-linked (GlcNAc...) asparagine). The disordered stretch occupies residues 608-628; it reads AASKGNPPPTTTSSPTASPTA. Positions 618–628 are enriched in low complexity; sequence TTSSPTASPTA. G629 carries GPI-anchor amidated glycine lipidation. Residues 630 to 652 constitute a propeptide, removed in mature form; it reads SAMLKAPVAMLAISALTVLAFYL.

Belongs to the peptidase S10 family.

Its subcellular location is the cell membrane. The catalysed reaction is Preferential release of a C-terminal arginine or lysine residue.. Its function is as follows. Extracellular serine carboxypeptidase that contributes to pathogenicity. This is Carboxypeptidase S1 homolog A (SCPA) from Trichophyton verrucosum (strain HKI 0517).